We begin with the raw amino-acid sequence, 496 residues long: Cytochrome P450 71B12 (496 aa).

Residues 2–22 (SLWYIIVAFVFFSSMIIVRII) traverse the membrane as a helical segment. Heme is bound at residue Cys-436.

It belongs to the cytochrome P450 family. It depends on heme as a cofactor.

It is found in the membrane. The polypeptide is Cytochrome P450 71B12 (CYP71B12) (Arabidopsis thaliana (Mouse-ear cress)).